The following is a 444-amino-acid chain: Methylenetetrahydrofolate--tRNA-(uracil-5-)-methyltransferase TrmFO (444 aa).

10-15 (GAGLAG) provides a ligand contact to FAD.

The protein belongs to the MnmG family. TrmFO subfamily. The cofactor is FAD.

The protein localises to the cytoplasm. The enzyme catalyses uridine(54) in tRNA + (6R)-5,10-methylene-5,6,7,8-tetrahydrofolate + NADH + H(+) = 5-methyluridine(54) in tRNA + (6S)-5,6,7,8-tetrahydrofolate + NAD(+). It catalyses the reaction uridine(54) in tRNA + (6R)-5,10-methylene-5,6,7,8-tetrahydrofolate + NADPH + H(+) = 5-methyluridine(54) in tRNA + (6S)-5,6,7,8-tetrahydrofolate + NADP(+). In terms of biological role, catalyzes the folate-dependent formation of 5-methyl-uridine at position 54 (M-5-U54) in all tRNAs. The polypeptide is Methylenetetrahydrofolate--tRNA-(uracil-5-)-methyltransferase TrmFO (Streptococcus equi subsp. zooepidemicus (strain H70)).